The chain runs to 277 residues: Leucine-rich repeat-containing protein 10 (277 aa).

7 LRR repeats span residues 53-74, 76-97, 99-120, 122-143, 145-167, 168-189, and 191-212; these read ELVK…LGQL, NLQI…VCTL, QLCI…LSLL, NLRT…VCEL, LLKT…RRLQ, ELRT…LLHM, and FLEV…AHLS.

The protein localises to the nucleus. Its function is as follows. May play important roles in cardiac development and/or cardiac function. The polypeptide is Leucine-rich repeat-containing protein 10 (LRRC10) (Homo sapiens (Human)).